We begin with the raw amino-acid sequence, 1026 residues long: Multidrug resistance protein MdtC (1026 aa).

The next 11 helical transmembrane spans lie at 12-32 (VATTLLTLAIAISGVISFSLL), 333-353 (EVEQSLVIAIGLVILVVFIFL), 360-380 (LIPAVAVPVSLIGSFTAMYLC), 387-407 (LSLMALTIATGFVVDDAIVVL), 431-451 (VGFTVLSMSVSLVAVFIPLLL), 463-483 (FAVTLSVSIGLSLIISLTLTP), 528-548 (WVLAVFLATIALNVWLYVSIP), 853-873 (LLLIAAAIATVYIVLGILYES), 897-917 (LFGAPFSLIALIGIMLLIGIV), 953-973 (PIMMTTLAALFGALPLVLTHG), and 984-1004 (ITIVGGLIVSQLLTLYTTPVV).

The protein belongs to the resistance-nodulation-cell division (RND) (TC 2.A.6) family. MdtC subfamily. As to quaternary structure, part of a tripartite efflux system composed of MdtA, MdtB and MdtC. MdtC forms a heteromultimer with MdtB.

It localises to the cell inner membrane. The chain is Multidrug resistance protein MdtC from Serratia proteamaculans (strain 568).